A 1935-amino-acid polypeptide reads, in one-letter code: Myosin-7 (1935 aa).

The 50-residue stretch at 32 to 81 (DLKKDVFVPDDKEEFVKAKIISREGGKITAETEHGKTVTVKEDQVLQQNP) folds into the Myosin N-terminal SH3-like domain. The region spanning 85–778 (DKIEDMAMLT…LLGLLEEMRD (694 aa)) is the Myosin motor domain. Position 129 is an N6,N6,N6-trimethyllysine (lysine 129). 178–185 (GESGAGKT) contributes to the ATP binding site. A Phosphothreonine modification is found at threonine 378. Actin-binding regions lie at residues 655–677 (LNKLMTNLRSTHPHFVRCIIPNE) and 757–771 (RFGHTKVFFKAGLLG). Residues 781–810 (LSRIITRIQAQSRGVLARMEFKKLLERRDS) enclose the IQ domain. A coiled-coil region spans residues 839–1935 (LLKSAETEKE…DIGTKGLNEE (1097 aa)). 2 positions are modified to phosphoserine: serine 1137 and serine 1269. Phosphothreonine is present on threonine 1282. Position 1308 is a phosphotyrosine (tyrosine 1308). The residue at position 1309 (threonine 1309) is a Phosphothreonine. Serine 1510 carries the phosphoserine modification. Threonine 1513 is modified (phosphothreonine). The disordered stretch occupies residues 1907 to 1935 (EERADIAESQVNKLRAKSRDIGTKGLNEE). Over residues 1923-1935 (KSRDIGTKGLNEE) the composition is skewed to basic and acidic residues.

Belongs to the TRAFAC class myosin-kinesin ATPase superfamily. Myosin family. In terms of assembly, muscle myosin is a hexameric protein that consists of 2 heavy chain subunits (MHC), 2 alkali light chain subunits (MLC) and 2 regulatory light chain subunits (MLC-2). Interacts with ECPAS. Interacts (via C-terminus) with LRRC39.

Its subcellular location is the cytoplasm. It is found in the myofibril. It localises to the sarcomere. In terms of biological role, myosins are actin-based motor molecules with ATPase activity essential for muscle contraction. Forms regular bipolar thick filaments that, together with actin thin filaments, constitute the fundamental contractile unit of skeletal and cardiac muscle. The chain is Myosin-7 (MYH7) from Equus caballus (Horse).